Here is a 471-residue protein sequence, read N- to C-terminus: UDP-N-acetylmuramate--L-alanine ligase (471 aa).

114 to 120 (GTHGKTT) contributes to the ATP binding site.

The protein belongs to the MurCDEF family.

The protein resides in the cytoplasm. The catalysed reaction is UDP-N-acetyl-alpha-D-muramate + L-alanine + ATP = UDP-N-acetyl-alpha-D-muramoyl-L-alanine + ADP + phosphate + H(+). It participates in cell wall biogenesis; peptidoglycan biosynthesis. Functionally, cell wall formation. This chain is UDP-N-acetylmuramate--L-alanine ligase, found in Rhizobium etli (strain ATCC 51251 / DSM 11541 / JCM 21823 / NBRC 15573 / CFN 42).